The primary structure comprises 348 residues: UDP-glucose 4-epimerase (348 aa).

Residues 12-14, 33-37, 66-67, phenylalanine 88, and lysine 92 contribute to the NAD(+) site; these read GYI, DNFHN, and DI. A substrate-binding site is contributed by 132 to 134; that stretch reads SAT. Catalysis depends on tyrosine 157, which acts as the Proton acceptor. NAD(+) is bound by residues lysine 161 and tyrosine 185. Substrate contacts are provided by residues 185-187, 206-208, 224-226, arginine 239, and 300-303; these read YFN, NNL, NVF, and REGD.

This sequence belongs to the NAD(P)-dependent epimerase/dehydratase family. In terms of assembly, homodimer. NAD(+) serves as cofactor.

The enzyme catalyses UDP-alpha-D-glucose = UDP-alpha-D-galactose. It carries out the reaction UDP-N-acetyl-alpha-D-glucosamine = UDP-N-acetyl-alpha-D-galactosamine. Its pathway is carbohydrate metabolism; galactose metabolism. Functionally, catalyzes two distinct but analogous reactions: the reversible epimerization of UDP-glucose to UDP-galactose and the reversible epimerization of UDP-N-acetylglucosamine to UDP-N-acetylgalactosamine. The reaction with UDP-Gal plays a critical role in the Leloir pathway of galactose catabolism in which galactose is converted to the glycolytic intermediate glucose 6-phosphate. It contributes to the catabolism of dietary galactose and enables the endogenous biosynthesis of both UDP-Gal and UDP-GalNAc when exogenous sources are limited. Both UDP-sugar interconversions are important in the synthesis of glycoproteins and glycolipids. The sequence is that of UDP-glucose 4-epimerase from Bos taurus (Bovine).